Consider the following 356-residue polypeptide: N-methyltransferase 4 (356 aa).

Residues 93 to 94 (QS), 128 to 136 (ILDIGCGFG), and 155 to 160 (TNSAEQ) contribute to the S-adenosyl-L-methionine site.

It belongs to the CFA/CMAS family. As to expression, expressed in stems, roots, flower buds and leaves.

In terms of biological role, probable N-methyltransferase not involved in benzylisoquinoline metabolism. Shows no detectable activity with (s)-coclaurine, (R)- or (S)-reticuline, papaverine or (R,S)-tetrahydropapaverine. This is N-methyltransferase 4 (NMT4) from Papaver somniferum (Opium poppy).